The chain runs to 112 residues: UPF0212 protein Mpal_1084 (112 aa).

Belongs to the UPF0212 family.

In Methanosphaerula palustris (strain ATCC BAA-1556 / DSM 19958 / E1-9c), this protein is UPF0212 protein Mpal_1084.